A 303-amino-acid polypeptide reads, in one-letter code: L(+)-tartrate dehydratase subunit alpha (303 aa).

3 residues coordinate iron-sulfur cluster: Cys71, Cys190, and Cys277.

This sequence belongs to the class-I fumarase family. Tetramer of two alpha and two beta subunits. Iron-sulfur cluster serves as cofactor.

The enzyme catalyses (2R,3R)-tartrate = oxaloacetate + H2O. In Escherichia coli O6:H1 (strain CFT073 / ATCC 700928 / UPEC), this protein is L(+)-tartrate dehydratase subunit alpha (ttdA).